Consider the following 125-residue polypeptide: Small ribosomal subunit protein uS12 (125 aa).

D89 bears the 3-methylthioaspartic acid mark.

Belongs to the universal ribosomal protein uS12 family. Part of the 30S ribosomal subunit. Contacts proteins S8 and S17. May interact with IF1 in the 30S initiation complex.

With S4 and S5 plays an important role in translational accuracy. In terms of biological role, interacts with and stabilizes bases of the 16S rRNA that are involved in tRNA selection in the A site and with the mRNA backbone. Located at the interface of the 30S and 50S subunits, it traverses the body of the 30S subunit contacting proteins on the other side and probably holding the rRNA structure together. The combined cluster of proteins S8, S12 and S17 appears to hold together the shoulder and platform of the 30S subunit. The protein is Small ribosomal subunit protein uS12 of Bordetella avium (strain 197N).